An 88-amino-acid polypeptide reads, in one-letter code: FXYD domain-containing ion transport regulator 3 (88 aa).

The not cleaved signal peptide spans 1–20; the sequence is MQEVVLSLLVLLAGLPTLDA. Residues 1–38 lie on the Extracellular side of the membrane; sequence MQEVVLSLLVLLAGLPTLDANDPENKNDPFYYDWYSLR. The chain crosses the membrane as a helical span at residues 39-59; sequence VGGLICAGILCALGIIVLMSG. At 60–88 the chain is on the cytoplasmic side; sequence KCKCKFRQKPSHRPGEGPPLITPGSAHNC. The tract at residues 67–88 is disordered; it reads QKPSHRPGEGPPLITPGSAHNC.

Belongs to the FXYD family. As to quaternary structure, regulatory subunit of the sodium/potassium-transporting ATPase which is composed of a catalytic alpha subunit, a non-catalytic beta subunit and an additional regulatory subunit. Interacts with catalytic alpha subunit ATP1A1. Also interacts with non-catalytic beta subunit ATP1B1. Interacts with the ATP1A1-ATP1B1, ATP1A2-ATP1B1 and ATP1A3-ATP1B1 NKA isozymes. Post-translationally, glutathionylated. As to expression, expressed at high levels in heart, skeletal muscle and liver with low levels of expression in breast, brain, lung, stomach and colon. In the gastric gland, mainly expressed in the mucus cells forming the upper part of the gland and is absent from the parietal cells.

It localises to the cell membrane. Its function is as follows. Associates with and regulates the activity of the sodium/potassium-transporting ATPase (NKA) which transports Na(+) out of the cell and K(+) into the cell. Reduces glutathionylation of the NKA beta-1 subunit ATP1B1, thus reversing glutathionylation-mediated inhibition of ATP1B1. Induces a hyperpolarization-activated chloride current when expressed in Xenopus oocytes. This Mus musculus (Mouse) protein is FXYD domain-containing ion transport regulator 3 (Fxyd3).